A 638-amino-acid polypeptide reads, in one-letter code: Actin-regulating kinase 1 (638 aa).

In terms of domain architecture, Protein kinase spans 22 to 298 (VEIIKYLTSG…VYQLLKRISI (277 aa)). ATP contacts are provided by residues 28 to 36 (LTSGGFAQV) and Lys56. Asp159 functions as the Proton acceptor in the catalytic mechanism. Ser478 is modified (phosphoserine). Over residues 482–515 (YSTRGNIKKNQSVKESLTSSSLPGTSFTPTSTKV) the composition is skewed to polar residues. Residues 482–518 (YSTRGNIKKNQSVKESLTSSSLPGTSFTPTSTKVNLK) form a disordered region. 2 positions are modified to phosphoserine: Ser522 and Ser535. Positions 569–638 (SEESFNARKM…LAGRKLSLDK (70 aa)) are disordered. Over residues 582 to 593 (KLHEKGEIDKPT) the composition is skewed to basic and acidic residues. The interval 602–615 (SKDKKTKPTPPPKP) is interaction with SH3 domain of ABP1.

Belongs to the protein kinase superfamily. Ser/Thr protein kinase family. As to quaternary structure, interacts with ABP1, which is required for proper actin patch localization.

It localises to the cytoplasm. The protein resides in the cytoskeleton. The protein localises to the actin patch. It catalyses the reaction L-seryl-[protein] + ATP = O-phospho-L-seryl-[protein] + ADP + H(+). The enzyme catalyses L-threonyl-[protein] + ATP = O-phospho-L-threonyl-[protein] + ADP + H(+). Its function is as follows. Involved in regulation of actin cytoskeleton organization and endocytosis. This chain is Actin-regulating kinase 1 (ARK1), found in Saccharomyces cerevisiae (strain ATCC 204508 / S288c) (Baker's yeast).